Reading from the N-terminus, the 362-residue chain is 3-dehydroquinate synthase (362 aa).

Residues 74-79, 108-112, 132-133, Lys-145, and Lys-154 contribute to the NAD(+) site; these read DGEEHK, GVTGD, and TT. Residues Glu-187, His-250, and His-267 each coordinate Zn(2+).

It belongs to the sugar phosphate cyclases superfamily. Dehydroquinate synthase family. Co(2+) serves as cofactor. Requires Zn(2+) as cofactor. The cofactor is NAD(+).

It localises to the cytoplasm. It catalyses the reaction 7-phospho-2-dehydro-3-deoxy-D-arabino-heptonate = 3-dehydroquinate + phosphate. It participates in metabolic intermediate biosynthesis; chorismate biosynthesis; chorismate from D-erythrose 4-phosphate and phosphoenolpyruvate: step 2/7. In terms of biological role, catalyzes the conversion of 3-deoxy-D-arabino-heptulosonate 7-phosphate (DAHP) to dehydroquinate (DHQ). The chain is 3-dehydroquinate synthase from Syntrophotalea carbinolica (strain DSM 2380 / NBRC 103641 / GraBd1) (Pelobacter carbinolicus).